Consider the following 112-residue polypeptide: Protein BEX5 (112 aa).

Basic and acidic residues-rich tracts occupy residues 1-12 (MEKDPKERREEE) and 30-51 (PKPR…REDM). The tract at residues 1–56 (MEKDPKERREEEQAPVQNEEACPMGGGEGPKPRENVRGDWDPPAQDFREDMPNGLV) is disordered. Residues 101 to 105 (HHDHH) form a his cluster region. Residue C109 coordinates Zn(2+).

It belongs to the BEX family. Ubiquitinated. Degraded by the proteasome.

It localises to the cytoplasm. This chain is Protein BEX5 (BEX5), found in Bos taurus (Bovine).